Here is a 119-residue protein sequence, read N- to C-terminus: MVKLAFPRELRLLTPAHFTFVFQQPQRAGTPQITILGRLNSLGHPRIGLTVAKKNVRRAHERNRIKRLTRESFRQRQHELPAMDFVVVAKKGVADLDNRALSEALEKLWRRHCRLARGS.

The protein belongs to the RnpA family. In terms of assembly, consists of a catalytic RNA component (M1 or rnpB) and a protein subunit.

The catalysed reaction is Endonucleolytic cleavage of RNA, removing 5'-extranucleotides from tRNA precursor.. RNaseP catalyzes the removal of the 5'-leader sequence from pre-tRNA to produce the mature 5'-terminus. It can also cleave other RNA substrates such as 4.5S RNA. The protein component plays an auxiliary but essential role in vivo by binding to the 5'-leader sequence and broadening the substrate specificity of the ribozyme. This is Ribonuclease P protein component from Salmonella arizonae (strain ATCC BAA-731 / CDC346-86 / RSK2980).